We begin with the raw amino-acid sequence, 157 residues long: MSLIPSFFGNNRRSNSIFDPFSLDVWDPFKELQFPSSLSGETSAITNARVDWKETAEAHVFKADLPGMKKEEVKVEIEDDSVLKISGERHVEKEEKQDTWHRVERSSGQFSRKFKLPENVKMDQVKASMENGVLTVTVPKVEEAKKKAQVKSIDISG.

The region spanning 41-156 is the sHSP domain; that stretch reads ETSAITNARV…KAQVKSIDIS (116 aa).

Belongs to the small heat shock protein (HSP20) family. In terms of assembly, homodimer under normal physiological conditions. Aggregates in high oligomeric complexes after heat shock. Binds to AKR2A and to chloroplasts. As to expression, expressed ubiquitously at low levels under normal physiological conditions.

The protein localises to the cytoplasm. In terms of biological role, cytosolic mediator for sorting and targeting of nascent chloroplast outer envelope membrane (OEM) proteins to the chloroplast. Functions as an AKR2A cofactor to facilitate the targeting of OEP7 to chloroplasts. The polypeptide is 17.8 kDa class I heat shock protein (HSP17.8) (Arabidopsis thaliana (Mouse-ear cress)).